Reading from the N-terminus, the 249-residue chain is ATP synthase subunit a, chloroplastic (249 aa).

5 helical membrane passes run 40–60, 97–117, 136–156, 201–221, and 222–242; these read QVLI…VLAI, VPFI…GALL, INTT…AGLS, LVVV…VMFL, and GLFT…AYIG.

Belongs to the ATPase A chain family. F-type ATPases have 2 components, CF(1) - the catalytic core - and CF(0) - the membrane proton channel. CF(1) has five subunits: alpha(3), beta(3), gamma(1), delta(1), epsilon(1). CF(0) has four main subunits: a, b, b' and c.

The protein localises to the plastid. It localises to the chloroplast thylakoid membrane. Key component of the proton channel; it plays a direct role in the translocation of protons across the membrane. In Capsella bursa-pastoris (Shepherd's purse), this protein is ATP synthase subunit a, chloroplastic.